A 176-amino-acid chain; its full sequence is Ribosome maturation factor RimM (176 aa).

The PRC barrel domain occupies 100–173; that stretch reads PEEYYDYQLI…RLRIDPPPGL (74 aa).

Belongs to the RimM family. As to quaternary structure, binds ribosomal protein uS19.

Its subcellular location is the cytoplasm. Its function is as follows. An accessory protein needed during the final step in the assembly of 30S ribosomal subunit, possibly for assembly of the head region. Essential for efficient processing of 16S rRNA. May be needed both before and after RbfA during the maturation of 16S rRNA. It has affinity for free ribosomal 30S subunits but not for 70S ribosomes. The sequence is that of Ribosome maturation factor RimM from Acidothermus cellulolyticus (strain ATCC 43068 / DSM 8971 / 11B).